Here is a 311-residue protein sequence, read N- to C-terminus: MSLKGRHLIDPNQLSLAELDNIITLGLEIYRNPNHYREICKGKILGTLFYEPSTRTRLSFESAMLRMGGTVLGFSDANTSSAKKGESIADTIRVLDDYADLLVMRHPREGAPLLASQYATVPIVNGGDGGHQHPTQTLTDLITIHHNKGKIENLKVAFCGDLLFGRTVHSLLKTLSRFPNMEFVFISPSELKIPKHLKDEVIKSNNVEIVETTFLEKHMSEIDILYMTRIQKERFFNEEEYVKLKDSYILDLQKLRNAKEDLLIMHPLPRVNEIHPEVDTDTRAKYFEQAKLGVYVRMALMALQLGVIESC.

2 residues coordinate carbamoyl phosphate: Arg-55 and Thr-56. Lys-84 provides a ligand contact to L-aspartate. Arg-105, His-133, and Gln-136 together coordinate carbamoyl phosphate. 2 residues coordinate L-aspartate: Arg-166 and Arg-229. Carbamoyl phosphate is bound by residues Leu-268 and Pro-269.

It belongs to the aspartate/ornithine carbamoyltransferase superfamily. ATCase family. In terms of assembly, heterododecamer (2C3:3R2) of six catalytic PyrB chains organized as two trimers (C3), and six regulatory PyrI chains organized as three dimers (R2).

It carries out the reaction carbamoyl phosphate + L-aspartate = N-carbamoyl-L-aspartate + phosphate + H(+). The protein operates within pyrimidine metabolism; UMP biosynthesis via de novo pathway; (S)-dihydroorotate from bicarbonate: step 2/3. In terms of biological role, catalyzes the condensation of carbamoyl phosphate and aspartate to form carbamoyl aspartate and inorganic phosphate, the committed step in the de novo pyrimidine nucleotide biosynthesis pathway. This chain is Aspartate carbamoyltransferase catalytic subunit, found in Alkaliphilus metalliredigens (strain QYMF).